Here is a 696-residue protein sequence, read N- to C-terminus: Glycine--tRNA ligase beta subunit (696 aa).

It belongs to the class-II aminoacyl-tRNA synthetase family. In terms of assembly, tetramer of two alpha and two beta subunits.

It localises to the cytoplasm. It catalyses the reaction tRNA(Gly) + glycine + ATP = glycyl-tRNA(Gly) + AMP + diphosphate. The sequence is that of Glycine--tRNA ligase beta subunit from Nitratidesulfovibrio vulgaris (strain ATCC 29579 / DSM 644 / CCUG 34227 / NCIMB 8303 / VKM B-1760 / Hildenborough) (Desulfovibrio vulgaris).